The following is a 306-amino-acid chain: UDP-3-O-acyl-N-acetylglucosamine deacetylase (306 aa).

Zn(2+) contacts are provided by His-79, His-238, and Asp-242. Residue His-265 is the Proton donor of the active site.

It belongs to the LpxC family. Zn(2+) serves as cofactor.

It carries out the reaction a UDP-3-O-[(3R)-3-hydroxyacyl]-N-acetyl-alpha-D-glucosamine + H2O = a UDP-3-O-[(3R)-3-hydroxyacyl]-alpha-D-glucosamine + acetate. It functions in the pathway glycolipid biosynthesis; lipid IV(A) biosynthesis; lipid IV(A) from (3R)-3-hydroxytetradecanoyl-[acyl-carrier-protein] and UDP-N-acetyl-alpha-D-glucosamine: step 2/6. In terms of biological role, catalyzes the hydrolysis of UDP-3-O-myristoyl-N-acetylglucosamine to form UDP-3-O-myristoylglucosamine and acetate, the committed step in lipid A biosynthesis. The chain is UDP-3-O-acyl-N-acetylglucosamine deacetylase from Shewanella frigidimarina (strain NCIMB 400).